Consider the following 446-residue polypeptide: Putrescine N-hydroxylase (446 aa).

Phenylalanine 17, aspartate 37, serine 38, lysine 39, tryptophan 44, and histidine 45 together coordinate FAD. 3 residues coordinate NADP(+): threonine 54, glutamine 56, and arginine 98. Glutamine 56 serves as a coordination point for FAD. Valine 121 is a binding site for FAD. NADP(+)-binding residues include serine 199, lysine 223, tyrosine 267, and leucine 301. Positions 378, 389, and 391 each coordinate FAD.

This sequence belongs to the lysine N(6)-hydroxylase/L-ornithine N(5)-oxygenase family. As to quaternary structure, homotetramer. It depends on FAD as a cofactor.

The enzyme catalyses putrescine + NADPH + O2 = N-hydroxyputrescine + NADP(+) + H2O. Its pathway is siderophore biosynthesis. Functionally, N-hydroxylating monooxygenase involved in the biosynthesis of fimsbactin A, the major siderophore produced by A.baumannii. Catalyzes the N-hydroxylation of the aliphatic diamine putrescine into N-hydroxyputrescine (NHP). Putrescine is the preferred substrate, but the enzyme can also catalyze the N-hydroxylation of cadaverine, with 4-fold lower catalytic efficiency. Cannot use lysine or ornithine as substrates. Uses both NADPH and NADH as the reducing cofactor with a preference for NADPH. This chain is Putrescine N-hydroxylase, found in Acinetobacter baumannii (strain ATCC 17978 / DSM 105126 / CIP 53.77 / LMG 1025 / NCDC KC755 / 5377).